We begin with the raw amino-acid sequence, 226 residues long: Apoptosis regulator OPG045 (226 aa).

This sequence belongs to the orthopoxvirus OPG045 family. In terms of assembly, homodimer. Interacts with host pro-apoptotic protein BCL2L11 (via BH3 domain). Interacts with host NLRP1. Interacts with host BAK.

It localises to the host mitochondrion outer membrane. Its subcellular location is the host cytoplasm. In terms of biological role, plays a role in evading host innate immune response by inhibiting host inflammasome activation. Interacts with and inhibits NLR-mediated interleukin-1 beta/IL1B production in infected cells. At the host mitochondria outer membrane, interacts with the BH3 domain of host BAK and prevents BAK from binding active BAX. In turn, host apoptosis is inhibited. In Vaccinia virus (strain Copenhagen) (VACV), this protein is Apoptosis regulator OPG045 (OPG045).